A 970-amino-acid chain; its full sequence is Longitudinals lacking protein, isoforms F/I/K/T (970 aa).

Positions V32–Q97 constitute a BTB domain. 4 disordered regions span residues L115 to L200, S228 to S340, D447 to Q468, and Q790 to D843. 4 stretches are compositionally biased toward low complexity: residues S162–P175, S228–T251, T263–S293, and N329–S340. Polar residues-rich tracts occupy residues D447–S456 and Q808–V818. Residues Q819–D828 show a composition bias toward low complexity. A C2H2-type 1; degenerate zinc finger spans residues Y903–E925. Residues H933–H955 form a C2H2-type 2 zinc finger.

As to expression, by stage 11, isoform F is expressed throughout the mesoderm whereas isoform T, and at low levels isoform I, is expressed throughout the ectoderm. Isoform K is expressed in both mesoderm and ectoderm. Expression becomes restricted during later stages; starting from stage 14 to 15, isoform F is expressed in the gut. Isoform I is expressed in the CNS. Isoform I and isoform F show expression in the epithelium starting at stage 14, though for isoform I the CNS expression remains predominant. Expression is also seen in specific types of cells in the embryo; isoform K is expressed in the ventral furrow at stage 5 and in a dynamic pattern in the ventral neurogenic region starting at stage 7. Isoform T is expressed around the tracheal pits at stage 11. Isoform F shows transient enrichment in a dorsal cell layer in the CNS at stages 13 and 14.

It localises to the nucleus. Functionally, putative transcription factor required for axon growth and guidance in the central and peripheral nervous systems. Repels CNS axons away from the midline by promoting the expression of the midline repellent sli and its receptor robo. This chain is Longitudinals lacking protein, isoforms F/I/K/T, found in Drosophila melanogaster (Fruit fly).